We begin with the raw amino-acid sequence, 94 residues long: Large ribosomal subunit protein bL25 (94 aa).

This sequence belongs to the bacterial ribosomal protein bL25 family. Part of the 50S ribosomal subunit; part of the 5S rRNA/L5/L18/L25 subcomplex. Contacts the 5S rRNA. Binds to the 5S rRNA independently of L5 and L18.

In terms of biological role, this is one of the proteins that binds to the 5S RNA in the ribosome where it forms part of the central protuberance. This chain is Large ribosomal subunit protein bL25, found in Pectobacterium carotovorum subsp. carotovorum (strain PC1).